Reading from the N-terminus, the 256-residue chain is uncharacterized protein (256 aa).

The N-terminal stretch at 1-23 is a signal peptide; it reads MKRLNKLVLGIIFLFLVISITAG. A lipid anchor (N-palmitoyl cysteine) is attached at cysteine 24. A lipid anchor (S-diacylglycerol cysteine) is attached at cysteine 24.

Belongs to the staphylococcal tandem lipoprotein family.

The protein resides in the cell membrane. This is an uncharacterized protein from Staphylococcus aureus (strain COL).